Here is a 717-residue protein sequence, read N- to C-terminus: DNA ligase (717 aa).

Residues 41–45 (DARYD), 90–91 (SL), and glutamate 124 contribute to the NAD(+) site. Lysine 126 functions as the N6-AMP-lysine intermediate in the catalytic mechanism. Residues arginine 147, glutamate 183, lysine 299, and lysine 323 each contribute to the NAD(+) site. Positions 428, 431, 446, and 452 each coordinate Zn(2+). The 82-residue stretch at 636–717 (ADYSPVAGKT…WLQLINEHHI (82 aa)) folds into the BRCT domain.

Belongs to the NAD-dependent DNA ligase family. LigA subfamily. It depends on Mg(2+) as a cofactor. Requires Mn(2+) as cofactor.

It catalyses the reaction NAD(+) + (deoxyribonucleotide)n-3'-hydroxyl + 5'-phospho-(deoxyribonucleotide)m = (deoxyribonucleotide)n+m + AMP + beta-nicotinamide D-nucleotide.. Its function is as follows. DNA ligase that catalyzes the formation of phosphodiester linkages between 5'-phosphoryl and 3'-hydroxyl groups in double-stranded DNA using NAD as a coenzyme and as the energy source for the reaction. It is essential for DNA replication and repair of damaged DNA. The protein is DNA ligase of Bartonella bacilliformis (strain ATCC 35685 / KC583 / Herrer 020/F12,63).